The sequence spans 281 residues: 2-dehydro-3-deoxyphosphooctonate aldolase (281 aa).

Belongs to the KdsA family.

The protein localises to the cytoplasm. It carries out the reaction D-arabinose 5-phosphate + phosphoenolpyruvate + H2O = 3-deoxy-alpha-D-manno-2-octulosonate-8-phosphate + phosphate. It functions in the pathway carbohydrate biosynthesis; 3-deoxy-D-manno-octulosonate biosynthesis; 3-deoxy-D-manno-octulosonate from D-ribulose 5-phosphate: step 2/3. The protein operates within bacterial outer membrane biogenesis; lipopolysaccharide biosynthesis. This Pseudomonas syringae pv. tomato (strain ATCC BAA-871 / DC3000) protein is 2-dehydro-3-deoxyphosphooctonate aldolase.